The chain runs to 176 residues: Inner membrane-spanning protein YciB (176 aa).

6 helical membrane passes run F3–F23, T24–H44, T49–H69, L81–I101, V121–F141, and F149–L169.

It belongs to the YciB family.

It is found in the cell inner membrane. Plays a role in cell envelope biogenesis, maintenance of cell envelope integrity and membrane homeostasis. In Burkholderia vietnamiensis (strain G4 / LMG 22486) (Burkholderia cepacia (strain R1808)), this protein is Inner membrane-spanning protein YciB.